We begin with the raw amino-acid sequence, 126 residues long: MSEPNPKAFPLADAALTQQILDIVQQATHLRQLKKGANEATKTLNRGISEFIIMAADAEPIEILLHLPLLCEDKNVPYIFVPSKVALGRACGVSRPVISASVTSNDASQLKDQIIQMKDKIERLLI.

It belongs to the eukaryotic ribosomal protein eL8 family. As to quaternary structure, component of the U3 snoRNP particle. Binds to the C'/D and B/C motifs in U3 snoRNA. Component of the 25S U4/U6.U5 tri-snRNP particle, a subcomplex of the spliceosome. Binds to the 5' stem-loop of U4 snRNA.

The protein localises to the nucleus. It is found in the nucleolus. Common component of the spliceosome and rRNA processing machinery. In association with the spliceosomal U4/U6.U5 tri-snRNP particle, required for splicing of pre-mRNA. In association with box C/D snoRNPs, required for processing of pre-ribosomal RNA (rRNA) and site-specific 2'-O-methylation of substrate RNAs. Essential for the accumulation and stability of U4 snRNA, U6 snRNA, and box C/D snoRNAs. The polypeptide is 13 kDa ribonucleoprotein-associated protein (SNU13) (Yarrowia lipolytica (strain CLIB 122 / E 150) (Yeast)).